We begin with the raw amino-acid sequence, 221 residues long: Bcl-2-related ovarian killer protein homolog A (221 aa).

The BH4 signature appears at 32–44; sequence KVLCRDYIHSRLH. The BH3 signature appears at 64–80; the sequence is VSSVLLWLGDELEYLRP. Positions 110–140 match the BH1 motif; that stretch reads EIFSTEYSRKGLEKHKGVTWGKIVSLYAVAG. The BH2 motif lies at 173-187; that stretch reads WLKKRGGWADITKCV. Residues 198–218 traverse the membrane as a helical segment; it reads WLVTAACACGHYLKAVVFYLL.

This sequence belongs to the Bcl-2 family. Strongest expression in ovary and eye, weaker expression in gut, kidney and brain. Little expression in liver or heart.

Its subcellular location is the membrane. Functionally, may play a role in apoptosis. Does not appear to show pro-apoptotic activity when expressed ectopically in early embryos. In Danio rerio (Zebrafish), this protein is Bcl-2-related ovarian killer protein homolog A.